We begin with the raw amino-acid sequence, 763 residues long: Nibrin (763 aa).

In terms of domain architecture, FHA spans 22–81 (YVVGRKNCAILIPEDQSISRCHATLSVSHPSANLGQTNAASVLSIKDSSKYGTTVNGDKM). 2 consecutive BRCT domains span residues 102–179 (SKYR…CELL) and 215–324 (KRKS…NPRR). Disordered regions lie at residues 389–496 (VKET…SSQT), 535–593 (SKAA…SEIE), and 738–763 (QTQQVREESLAEDLFRYNPKPSKRRR). A compositionally biased stretch (basic and acidic residues) spans 423-433 (LFREDETDTRK). The span at 434–443 (NTPSLLPTKS) shows a compositional bias: polar residues. The short motif at 469-474 (AKKRDR) is the Nuclear localization signal element. A compositionally biased stretch (basic and acidic residues) spans 473-482 (DRAEDEKEAS). A compositionally biased stretch (basic and acidic residues) spans 742 to 752 (VREESLAEDLF). The FxF/Y motif motif lies at 748-757 (AEDLFRYNPK).

It belongs to the Nibrin family. In terms of assembly, component of the MRN complex composed of two heterodimers rad50 and mre11 associated with a single nbn.

It is found in the nucleus. The protein localises to the chromosome. It localises to the PML body. Its subcellular location is the telomere. Functionally, component of the MRN complex, which plays a central role in double-strand break (DSB) repair, DNA recombination, maintenance of telomere integrity and meiosis. The MRN complex is involved in the repair of DNA double-strand breaks (DSBs) via homologous recombination (HR), an error-free mechanism which primarily occurs during S and G2 phases. The complex (1) mediates the end resection of damaged DNA, which generates proper single-stranded DNA, a key initial steps in HR, and is (2) required for the recruitment of other repair factors and efficient activation of ATM and ATR upon DNA damage. The MRN complex possesses single-strand endonuclease activity and double-strand-specific 3'-5' exonuclease activity, which are provided by MRE11, to initiate end resection, which is required for single-strand invasion and recombination. Within the MRN complex, nbn acts as a protein-protein adapter, which specifically recognizes and binds phosphorylated proteins, promoting their recruitment to DNA damage sites. Recruits mre11 and rad50 components of the MRN complex to DSBs in response to DNA damage. Promotes the recruitment of PI3/PI4-kinase family members atm, atr, and probably DNA-PKcs to the DNA damage sites, activating their functions. Mediates the recruitment of phosphorylated rbbp8/CtIP to DSBs, leading to cooperation between the MRN complex and rbbp8/CtIP to initiate end resection. The MRN complex promotes recruitment of topbp1 to DNA damage sites. The MRN complex and rbbp8/CtIP are also required for chromosome alignment during metaphase. This chain is Nibrin, found in Xenopus laevis (African clawed frog).